Consider the following 215-residue polypeptide: MADKSDLNALSGRFRGYYPVVIDVETAGFNAQSDALLEIAAVTLQMNKEGWLLPDETLHFHVEPFEGANLQPEALAFNGIDPTNPLRGAVSEHDALHAIFKAVRKGIKDKGCNRAIIVAHNANFDHSFVMAAAERASLKRNPFHPFATFDTAALSGLVLGQTVLAKACLAAGIPFDSSQAHSALYDTLQTAKLFCELVNRWKKLGGWPLPAAESG.

The Exonuclease domain maps to 20 to 194 (VVIDVETAGF…YDTLQTAKLF (175 aa)). Mg(2+)-binding residues include Asp-23, Glu-25, His-181, and Asp-186. Residue His-181 is the Proton donor/acceptor of the active site.

This sequence belongs to the RNase T family. Homodimer. The cofactor is Mg(2+).

Functionally, trims short 3' overhangs of a variety of RNA species, leaving a one or two nucleotide 3' overhang. Responsible for the end-turnover of tRNA: specifically removes the terminal AMP residue from uncharged tRNA (tRNA-C-C-A). Also appears to be involved in tRNA biosynthesis. The protein is Ribonuclease T of Yersinia pestis.